A 289-amino-acid polypeptide reads, in one-letter code: Rhodopsin (289 aa).

At 1–7 (YLVSPAA) the chain is on the extracellular side. A helical transmembrane segment spans residues 8–32 (YAALGAYMFLLILIGFPVNFLTLYV). The Cytoplasmic portion of the chain corresponds to 33 to 44 (TLEHKKLRTPLN). A helical transmembrane segment spans residues 45-67 (YILLNLAVADLFMVLGGFTTTMY). Residues 68 to 81 (TSMHGYFVLGRLGC) lie on the Extracellular side of the membrane. Cysteine 81 and cysteine 158 form a disulfide bridge. The helical transmembrane segment at 82–104 (NLEGFFATLGGEIALWSLVVLAI) threads the bilayer. Residues 105-107 (ERW) carry the 'Ionic lock' involved in activated form stabilization motif. Over 105 to 123 (ERWIVVCKPISKFRFTEDN) the chain is Cytoplasmic. A helical membrane pass occupies residues 124-144 (AIMGLAFSWVMALACAVPPLV). At 145–173 (GWLRYIPEGMQCTCGVDYYTRAEGFDNES) the chain is on the extracellular side. Asparagine 171 carries an N-linked (GlcNAc...) asparagine glycan. The chain crosses the membrane as a helical span at residues 174 to 195 (FVIYMFIVHFLIPLSVIFFCYG). At 196 to 223 (RLLCAVKEAAAAQQESETTQRAEKEVSR) the chain is on the cytoplasmic side. Residues 224-245 (MVVIMVIGFLVCWLPYASVAWW) form a helical membrane-spanning segment. Over 246–257 (IFCNQGSDFGPI) the chain is Extracellular. Residues 258-279 (FMTLPSFFAKRPAIYNPMIYIC) traverse the membrane as a helical segment. Residue lysine 267 is modified to N6-(retinylidene)lysine. Over 280 to 289 (MNKQFRHCMI) the chain is Cytoplasmic.

Belongs to the G-protein coupled receptor 1 family. Opsin subfamily. In terms of processing, phosphorylated on some or all of the serine and threonine residues present in the C-terminal region. Post-translationally, contains one covalently linked retinal chromophore.

Its subcellular location is the membrane. It localises to the cell projection. The protein localises to the cilium. The protein resides in the photoreceptor outer segment. Photoreceptor required for image-forming vision at low light intensity. While most salt water fish species use retinal as chromophore, most freshwater fish use 3-dehydroretinal, or a mixture of retinal and 3-dehydroretinal. Light-induced isomerization of 11-cis to all-trans retinal triggers a conformational change that activates signaling via G-proteins. Subsequent receptor phosphorylation mediates displacement of the bound G-protein alpha subunit by arrestin and terminates signaling. This Batrachocottus nikolskii (Fat sculpin) protein is Rhodopsin (rho).